A 250-amino-acid chain; its full sequence is Small ribosomal subunit protein uS3 (250 aa).

The region spanning 39–107 is the KH type-2 domain; it reads VRAALKKRLY…EVHLNIVEIR (69 aa). A disordered region spans residues 215–250; sequence LDKRLATESGPAGEGGGRERGDRPDRGDRRDRRDRA. The span at 230–250 shows a compositional bias: basic and acidic residues; that stretch reads GGRERGDRPDRGDRRDRRDRA.

This sequence belongs to the universal ribosomal protein uS3 family. In terms of assembly, part of the 30S ribosomal subunit. Forms a tight complex with proteins S10 and S14.

In terms of biological role, binds the lower part of the 30S subunit head. Binds mRNA in the 70S ribosome, positioning it for translation. The polypeptide is Small ribosomal subunit protein uS3 (Caulobacter vibrioides (strain ATCC 19089 / CIP 103742 / CB 15) (Caulobacter crescentus)).